A 330-amino-acid chain; its full sequence is Glycerol-3-phosphate dehydrogenase [NAD(P)+] 1 (330 aa).

W15, R35, and K105 together coordinate NADPH. Residues K105, G133, and T135 each contribute to the sn-glycerol 3-phosphate site. A137 contacts NADPH. Sn-glycerol 3-phosphate-binding residues include K188, D241, S251, R252, and N253. K188 (proton acceptor) is an active-site residue. R252 is an NADPH binding site. Residues I276 and E278 each contribute to the NADPH site.

This sequence belongs to the NAD-dependent glycerol-3-phosphate dehydrogenase family.

The protein localises to the cytoplasm. The enzyme catalyses sn-glycerol 3-phosphate + NAD(+) = dihydroxyacetone phosphate + NADH + H(+). The catalysed reaction is sn-glycerol 3-phosphate + NADP(+) = dihydroxyacetone phosphate + NADPH + H(+). Its pathway is membrane lipid metabolism; glycerophospholipid metabolism. Catalyzes the reduction of the glycolytic intermediate dihydroxyacetone phosphate (DHAP) to sn-glycerol 3-phosphate (G3P), the key precursor for phospholipid synthesis. This is Glycerol-3-phosphate dehydrogenase [NAD(P)+] 1 from Sphingopyxis alaskensis (strain DSM 13593 / LMG 18877 / RB2256) (Sphingomonas alaskensis).